The sequence spans 207 residues: Octanoyltransferase (207 aa).

A BPL/LPL catalytic domain is found at 27 to 202 (GETPDELWIV…HLETRLARPQ (176 aa)). Substrate is bound by residues 66–73 (RGGQITYH), 133–135 (SLG), and 146–148 (GLS). The Acyl-thioester intermediate role is filled by C164.

Belongs to the LipB family.

The protein resides in the cytoplasm. The catalysed reaction is octanoyl-[ACP] + L-lysyl-[protein] = N(6)-octanoyl-L-lysyl-[protein] + holo-[ACP] + H(+). Its pathway is protein modification; protein lipoylation via endogenous pathway; protein N(6)-(lipoyl)lysine from octanoyl-[acyl-carrier-protein]: step 1/2. Catalyzes the transfer of endogenously produced octanoic acid from octanoyl-acyl-carrier-protein onto the lipoyl domains of lipoate-dependent enzymes. Lipoyl-ACP can also act as a substrate although octanoyl-ACP is likely to be the physiological substrate. This is Octanoyltransferase from Laribacter hongkongensis (strain HLHK9).